Consider the following 1059-residue polypeptide: MPKRKDIQKVLVIGSGPIVIGQAAEFDYSGTQAALSLKEEGYYVILVNSNPATIMTDAEIADKVYIEPLSIDFIERILRKERPDAILPTLGGQTGLNMAKNLSEAGILDELRIELLGTKLSAIEEAEDREEFKALMERLNEPIPESVIATTVEEAVDFADTHGYPVIVRPAYTLGGTGGGIAATHQELVDISANGLELSPVTQVLIERSIAGYKEIEFEVMRDAHDNALVVASMENFDPVGVHTGDSIVTAPVQTLSDREVQMMRDAALKIIRALKIEGGVNIQMALDPQSYKYYIIEVNPRVSRSSALASKATGYPIAKMAAKIAVGLTLDEIINPVTGTTKAEFEPALDYVVFKIPRWPFDKFATADRRLGTQMKATGEVMAIGRNMEEAMLKAVRSLEIGVTGLNDLTFDELSDEALLSALMPARDDRLFMIADLLRRGVSIETIHAKTQIDEFFLDKVSHVVEIERDLSTHVGDIEYLLYAKKNGFADATIAGLWGQTAAEVRKQRHDANVLPVYKMVDTVAAEFESQTPYFYATYERENESVRSKKPSVIVLGSGPIRIGQGVEFDYATVHAVKAIQRAGYEAIIMNSNPETVSTDFSISDKLYFEPLTLEDVLNVIDLEQPLGVVVQFGGQTAINLAQPLEENGVNILGTTVDDLNRAEDREAFDQVIKTLALPQPVGKTATTVDGALNAAQAIGYPVLIRPSYVLGGRAMEIVSSDDELQDYMQRAVKVSNDHPVLIDSYLVGQEAEVDVLSDGETAVIPGIMEHIERAGVHSGDSMSVYPPQYLSQKVQDEMTAAAINLAKAMNTIGLMNVQFVIHDNTAYVIEVNPRASRTVPFISKVTHLPLAQLATRVMLGEKLVDMGFETGLIPADDMVHVKAPIFSFTKLPDVDSLLGPEMKSTGEVMGSDTTLPKALYKAFVASNIKVPQYGNVLFTVADADKAEAINLAKRFNNLGFALFATSGTGAHFAEQNLPVDILDKIAESDNNSVAALRSQRLQVVINTTQADDRAESDGRLIRNAAIENAVPLFTALDTVSAFLDVLESRSFTVNEMK.

Residues 1–401 (MPKRKDIQKV…AMLKAVRSLE (401 aa)) are carboxyphosphate synthetic domain. ATP-binding residues include R129, R169, G175, G176, R208, I210, E215, G241, V242, H243, Q284, and E298. The 195-residue stretch at 133-327 (KALMERLNEP…IAKMAAKIAV (195 aa)) folds into the ATP-grasp 1 domain. Q284, E298, and N300 together coordinate Mg(2+). Positions 284, 298, and 300 each coordinate Mn(2+). Residues 402–546 (IGVTGLNDLT…YATYERENES (145 aa)) form an oligomerization domain region. Residues 547–929 (VRSKKPSVIV…ALYKAFVASN (383 aa)) are carbamoyl phosphate synthetic domain. The region spanning 671-861 (DQVIKTLALP…LAQLATRVML (191 aa)) is the ATP-grasp 2 domain. ATP contacts are provided by R707, S746, L748, E752, G777, V778, H779, S780, Q820, and E832. Mg(2+) is bound by residues Q820, E832, and N834. Mn(2+) is bound by residues Q820, E832, and N834. The MGS-like domain occupies 930–1059 (IKVPQYGNVL…SRSFTVNEMK (130 aa)). Residues 930-1059 (IKVPQYGNVL…SRSFTVNEMK (130 aa)) form an allosteric domain region.

It belongs to the CarB family. In terms of assembly, composed of two chains; the small (or glutamine) chain promotes the hydrolysis of glutamine to ammonia, which is used by the large (or ammonia) chain to synthesize carbamoyl phosphate. Tetramer of heterodimers (alpha,beta)4. Mg(2+) serves as cofactor. It depends on Mn(2+) as a cofactor.

The enzyme catalyses hydrogencarbonate + L-glutamine + 2 ATP + H2O = carbamoyl phosphate + L-glutamate + 2 ADP + phosphate + 2 H(+). It catalyses the reaction hydrogencarbonate + NH4(+) + 2 ATP = carbamoyl phosphate + 2 ADP + phosphate + 2 H(+). The protein operates within amino-acid biosynthesis; L-arginine biosynthesis; carbamoyl phosphate from bicarbonate: step 1/1. It functions in the pathway pyrimidine metabolism; UMP biosynthesis via de novo pathway; (S)-dihydroorotate from bicarbonate: step 1/3. Functionally, large subunit of the glutamine-dependent carbamoyl phosphate synthetase (CPSase). CPSase catalyzes the formation of carbamoyl phosphate from the ammonia moiety of glutamine, carbonate, and phosphate donated by ATP, constituting the first step of 2 biosynthetic pathways, one leading to arginine and/or urea and the other to pyrimidine nucleotides. The large subunit (synthetase) binds the substrates ammonia (free or transferred from glutamine from the small subunit), hydrogencarbonate and ATP and carries out an ATP-coupled ligase reaction, activating hydrogencarbonate by forming carboxy phosphate which reacts with ammonia to form carbamoyl phosphate. The protein is Carbamoyl phosphate synthase large chain of Leuconostoc citreum (strain KM20).